The primary structure comprises 75 residues: Translational regulator CsrA (75 aa).

The protein belongs to the CsrA/RsmA family. In terms of assembly, homodimer; the beta-strands of each monomer intercalate to form a hydrophobic core, while the alpha-helices form wings that extend away from the core. Interacts with FliW.

The protein localises to the cytoplasm. In terms of biological role, a translational regulator that binds mRNA to regulate translation initiation and/or mRNA stability. Usually binds in the 5'-UTR at or near the Shine-Dalgarno sequence preventing ribosome-binding, thus repressing translation. Its function is probably anatagonized by FliW. Inhibits translation of flaA mRNA in vitro. Involved in post-transcriptional regulation of flagellin biosynthesis. This Campylobacter jejuni subsp. jejuni serotype O:6 (strain 81116 / NCTC 11828) protein is Translational regulator CsrA.